The following is a 226-amino-acid chain: Cytidylate kinase (226 aa).

12-20 (GPSGAGKGT) is a binding site for ATP.

The protein belongs to the cytidylate kinase family. Type 1 subfamily.

It is found in the cytoplasm. The enzyme catalyses CMP + ATP = CDP + ADP. The catalysed reaction is dCMP + ATP = dCDP + ADP. This chain is Cytidylate kinase, found in Xanthomonas campestris pv. campestris (strain 8004).